Here is a 374-residue protein sequence, read N- to C-terminus: Queuine tRNA-ribosyltransferase (374 aa).

Asp89 (proton acceptor) is an active-site residue. Substrate is bound by residues 89 to 93 (DSGGF), Asp143, Gln187, and Gly214. The interval 245-251 (GVGKPED) is RNA binding. Asp264 (nucleophile) is an active-site residue. The RNA binding; important for wobble base 34 recognition stretch occupies residues 269-273 (TRNAR). Cys302, Cys304, Cys307, and His333 together coordinate Zn(2+).

Belongs to the queuine tRNA-ribosyltransferase family. Homodimer. Within each dimer, one monomer is responsible for RNA recognition and catalysis, while the other monomer binds to the replacement base PreQ1. It depends on Zn(2+) as a cofactor.

It catalyses the reaction 7-aminomethyl-7-carbaguanine + guanosine(34) in tRNA = 7-aminomethyl-7-carbaguanosine(34) in tRNA + guanine. It participates in tRNA modification; tRNA-queuosine biosynthesis. Catalyzes the base-exchange of a guanine (G) residue with the queuine precursor 7-aminomethyl-7-deazaguanine (PreQ1) at position 34 (anticodon wobble position) in tRNAs with GU(N) anticodons (tRNA-Asp, -Asn, -His and -Tyr). Catalysis occurs through a double-displacement mechanism. The nucleophile active site attacks the C1' of nucleotide 34 to detach the guanine base from the RNA, forming a covalent enzyme-RNA intermediate. The proton acceptor active site deprotonates the incoming PreQ1, allowing a nucleophilic attack on the C1' of the ribose to form the product. After dissociation, two additional enzymatic reactions on the tRNA convert PreQ1 to queuine (Q), resulting in the hypermodified nucleoside queuosine (7-(((4,5-cis-dihydroxy-2-cyclopenten-1-yl)amino)methyl)-7-deazaguanosine). This is Queuine tRNA-ribosyltransferase from Shewanella sp. (strain MR-4).